We begin with the raw amino-acid sequence, 269 residues long: Thiazole synthase (269 aa).

The active-site Schiff-base intermediate with DXP is K109. 1-deoxy-D-xylulose 5-phosphate-binding positions include G170, A196–G197, and N218–T219.

The protein belongs to the ThiG family. In terms of assembly, homotetramer. Forms heterodimers with either ThiH or ThiS.

Its subcellular location is the plastid. It is found in the chloroplast. It carries out the reaction [ThiS sulfur-carrier protein]-C-terminal-Gly-aminoethanethioate + 2-iminoacetate + 1-deoxy-D-xylulose 5-phosphate = [ThiS sulfur-carrier protein]-C-terminal Gly-Gly + 2-[(2R,5Z)-2-carboxy-4-methylthiazol-5(2H)-ylidene]ethyl phosphate + 2 H2O + H(+). It functions in the pathway cofactor biosynthesis; thiamine diphosphate biosynthesis. Its function is as follows. Catalyzes the rearrangement of 1-deoxy-D-xylulose 5-phosphate (DXP) to produce the thiazole phosphate moiety of thiamine. Sulfur is provided by the thiocarboxylate moiety of the carrier protein ThiS. In vitro, sulfur can be provided by H(2)S. In Thalassiosira pseudonana (Marine diatom), this protein is Thiazole synthase.